The chain runs to 219 residues: Thymidylate kinase (219 aa).

7-14 (GIDGCGKT) is an ATP binding site.

This sequence belongs to the thymidylate kinase family.

The enzyme catalyses dTMP + ATP = dTDP + ADP. Phosphorylation of dTMP to form dTDP in both de novo and salvage pathways of dTTP synthesis. This Anaplasma phagocytophilum (strain HZ) protein is Thymidylate kinase.